The sequence spans 146 residues: MSTILVLHGPNLNMLGTREPEVYGHETLADIDDRLRSKAAEKGHHLLHLQSNAEYELIERVHEARAEGVDFIIINPAAFTHTSVALRDAMLASGIPFIEVHLSNVHAREPFRHHSYFSDIAEGVICGLGSQGYDLALKAALQRIHR.

Y23 functions as the Proton acceptor in the catalytic mechanism. The substrate site is built by N75, H81, and D88. H101 functions as the Proton donor in the catalytic mechanism. Substrate is bound by residues 102–103 and R112; that span reads LS.

It belongs to the type-II 3-dehydroquinase family. As to quaternary structure, homododecamer.

It catalyses the reaction 3-dehydroquinate = 3-dehydroshikimate + H2O. It participates in metabolic intermediate biosynthesis; chorismate biosynthesis; chorismate from D-erythrose 4-phosphate and phosphoenolpyruvate: step 3/7. In terms of biological role, catalyzes a trans-dehydration via an enolate intermediate. The chain is 3-dehydroquinate dehydratase from Marinobacter nauticus (strain ATCC 700491 / DSM 11845 / VT8) (Marinobacter aquaeolei).